The primary structure comprises 649 residues: tRNA-guanine(15) transglycosylase (649 aa).

Asp88 serves as the catalytic Nucleophile. Substrate contacts are provided by Asp123 and Ala194. Zn(2+) is bound by residues Cys280, Cys282, and Cys285. In terms of domain architecture, PUA spans 573–648 (KYRIVIDSSV…VAATLRGGLK (76 aa)).

The protein belongs to the archaeosine tRNA-ribosyltransferase family. Requires Zn(2+) as cofactor.

The catalysed reaction is guanosine(15) in tRNA + 7-cyano-7-deazaguanine = 7-cyano-7-carbaguanosine(15) in tRNA + guanine. The protein operates within tRNA modification; archaeosine-tRNA biosynthesis. Exchanges the guanine residue with 7-cyano-7-deazaguanine (preQ0) at position 15 in the dihydrouridine loop (D-loop) of archaeal tRNAs. This chain is tRNA-guanine(15) transglycosylase, found in Methanococcus maripaludis (strain DSM 14266 / JCM 13030 / NBRC 101832 / S2 / LL).